The chain runs to 139 residues: Exodeoxyribonuclease 7 small subunit (139 aa).

Disordered stretches follow at residues 1–26 and 82–139; these read MAKK…LGDF and DAEG…EDDE. The span at 130 to 139 shows a compositional bias: acidic residues; the sequence is ADLDSAEDDE.

It belongs to the XseB family. As to quaternary structure, heterooligomer composed of large and small subunits.

It is found in the cytoplasm. The enzyme catalyses Exonucleolytic cleavage in either 5'- to 3'- or 3'- to 5'-direction to yield nucleoside 5'-phosphates.. Its function is as follows. Bidirectionally degrades single-stranded DNA into large acid-insoluble oligonucleotides, which are then degraded further into small acid-soluble oligonucleotides. The polypeptide is Exodeoxyribonuclease 7 small subunit (Rhodopirellula baltica (strain DSM 10527 / NCIMB 13988 / SH1)).